The primary structure comprises 353 residues: 4-hydroxy-3-methylbut-2-en-1-yl diphosphate synthase (flavodoxin) (353 aa).

Cys-263, Cys-266, Cys-298, and Glu-305 together coordinate [4Fe-4S] cluster.

Belongs to the IspG family. Requires [4Fe-4S] cluster as cofactor.

It carries out the reaction (2E)-4-hydroxy-3-methylbut-2-enyl diphosphate + oxidized [flavodoxin] + H2O + 2 H(+) = 2-C-methyl-D-erythritol 2,4-cyclic diphosphate + reduced [flavodoxin]. Its pathway is isoprenoid biosynthesis; isopentenyl diphosphate biosynthesis via DXP pathway; isopentenyl diphosphate from 1-deoxy-D-xylulose 5-phosphate: step 5/6. Its function is as follows. Converts 2C-methyl-D-erythritol 2,4-cyclodiphosphate (ME-2,4cPP) into 1-hydroxy-2-methyl-2-(E)-butenyl 4-diphosphate. The protein is 4-hydroxy-3-methylbut-2-en-1-yl diphosphate synthase (flavodoxin) of Geobacter sulfurreducens (strain ATCC 51573 / DSM 12127 / PCA).